We begin with the raw amino-acid sequence, 128 residues long: MLNSRFPVSVKKSHSLRERKVFTTILQSKTRFFGTFINAYFIKNNHSTWRVAISIAKTKYKLAVQRNLIKRQIRSIFQQISNNLEPWDILVIVNKGFIELTFKEKQKLFLQLLKRIKEVDAYQTSANK.

This sequence belongs to the RnpA family. In terms of assembly, consists of a catalytic RNA component (M1 or rnpB) and a protein subunit.

It catalyses the reaction Endonucleolytic cleavage of RNA, removing 5'-extranucleotides from tRNA precursor.. In terms of biological role, RNaseP catalyzes the removal of the 5'-leader sequence from pre-tRNA to produce the mature 5'-terminus. It can also cleave other RNA substrates such as 4.5S RNA. The protein component plays an auxiliary but essential role in vivo by binding to the 5'-leader sequence and broadening the substrate specificity of the ribozyme. This Mycoplasma genitalium (strain ATCC 33530 / DSM 19775 / NCTC 10195 / G37) (Mycoplasmoides genitalium) protein is Ribonuclease P protein component.